A 694-amino-acid polypeptide reads, in one-letter code: Lamina-associated polypeptide 2, isoform alpha (694 aa).

The LEM-like domain maps to 5–48 (LEDPSVLTKDKLKSELVANNVTLPAGEQRKDVYVQLYLQHLTAR). 2 disordered regions span residues 47-117 (ARNR…ELTN) and 150-209 (REQG…FSEL). The interval 49 to 108 (NRPPLPAGTNSKGPPDFSSDEEREPTPVLGSGAAAAGRSRAAVGRKATKKTDKPRQEDKD) is linker. T57 bears the Phosphothreonine mark. A phosphoserine mark is found at S59, S66, and S67. T74 carries the post-translational modification Phosphothreonine. A compositionally biased stretch (low complexity) spans 78 to 93 (GSGAAAAGRSRAAVGR). S79 is modified (phosphoserine). R86 and R88 each carry omega-N-methylarginine. Over residues 97–106 (KKTDKPRQED) the composition is skewed to basic and acidic residues. A compositionally biased stretch (acidic residues) spans 107-117 (KDDLDVTELTN). In terms of domain architecture, LEM spans 109–153 (DLDVTELTNEDLLDQLVKYGVNPGPIVGTTRKLYEKKLLKLREQG). T154 carries the phosphothreonine modification. Residues 155-178 (ESRSSTPLPTISSSAENTRQNGSN) are compositionally biased toward polar residues. A phosphoserine mark is found at S156 and S159. T160 and T164 each carry phosphothreonine. Residues S166 and S168 each carry the phosphoserine modification. Residues 179-191 (DSDRYSDNEEGKK) show a composition bias toward basic and acidic residues. The short motif at 190-196 (KKKEHKK) is the Nuclear localization signal element. S272, S312, S351, S354, S370, and S424 each carry phosphoserine. Positions 338-368 (QPLCPERSHISDQSPLSSKRKALEESESSQL) are disordered. A coiled-coil region spans residues 558-657 (TESCNQQLDL…VGRRYLWLKD (100 aa)). K656 is subject to N6-acetyllysine.

Belongs to the LEM family. In terms of assembly, interacts with LMNA, BANF1 and RB1 and with chromosomes. Associates directly or indirectly with lamins at specific cell-cycle stages. Interacts with CMTM6. Post-translationally, phosphorylated in a mitose-specific manner. Expressed in many tissues. Most abundant in adult thymus and fetal liver.

Its subcellular location is the nucleus. It localises to the chromosome. Its function is as follows. May be involved in the structural organization of the nucleus and in the post-mitotic nuclear assembly. Plays an important role, together with LMNA, in the nuclear anchorage of RB1. In terms of biological role, TP and TP5 may play a role in T-cell development and function. TP5 is an immunomodulating pentapeptide. The protein is Lamina-associated polypeptide 2, isoform alpha (TMPO) of Homo sapiens (Human).